A 276-amino-acid polypeptide reads, in one-letter code: Merozoite surface protein 2 (276 aa).

An N-terminal signal peptide occupies residues 1–20; sequence MKVIKTLSIINFFIFVTFNI. Residues Asn-22 and Asn-36 are each glycosylated (N-linked (GlcNAc...) asparagine). Positions 44–202 are polymorphic region; that stretch reads AESNPSTGAG…EQTESPELQS (159 aa). The interval 44 to 242 is disordered; that stretch reads AESNPSTGAG…CTDGNKENCG (199 aa). Positions 51–90 are enriched in gly residues; the sequence is GAGGSGSAGGSGSAGGSGSAGGSGSAGGSGSAGSGDGNGA. 5 consecutive repeat copies span residues 53–58, 59–64, 65–70, 71–76, and 77–82. Residues 53–82 are 5 X 6 AA tandem repeats of G-G-S-G-S-A; that stretch reads GGSGSAGGSGSAGGSGSAGGSGSAGGSGSA. Low complexity predominate over residues 91-127; that stretch reads NPGADAERSPSTPATTTTTTTTNDAEASTSTSSENPN. 3 stretches are compositionally biased toward polar residues: residues 143-169, 176-187, and 194-204; these read KPNQANKETQNNSNVQQDSQTKSNVPP, KSPTAQPEQAEN, and QTESPELQSAP. Asn-153 carries an N-linked (GlcNAc...) asparagine glycan. An N-linked (GlcNAc...) asparagine glycan is attached at Asn-225. Over residues 229–238 the composition is skewed to basic and acidic residues; it reads SQKECTDGNK. A disulfide bridge connects residues Cys-233 and Cys-241. N-linked (GlcNAc...) asparagine glycosylation is present at Asn-250. The GPI-anchor amidated asparagine moiety is linked to residue Asn-250. A propeptide spans 251–276 (removed in mature form); the sequence is SSNIASINKFVVLISATLVLSFAIFI.

The protein resides in the cell membrane. In terms of biological role, may play a role in the merozoite attachment to the erythrocyte. In Plasmodium falciparum (isolate 7G8), this protein is Merozoite surface protein 2.